We begin with the raw amino-acid sequence, 206 residues long: Small ribosomal subunit protein uS4 (206 aa).

The S4 RNA-binding domain maps to 96–157 (QRLDNVVYRM…KAKKQARIGA (62 aa)).

Belongs to the universal ribosomal protein uS4 family. As to quaternary structure, part of the 30S ribosomal subunit. Contacts protein S5. The interaction surface between S4 and S5 is involved in control of translational fidelity.

Functionally, one of the primary rRNA binding proteins, it binds directly to 16S rRNA where it nucleates assembly of the body of the 30S subunit. In terms of biological role, with S5 and S12 plays an important role in translational accuracy. This chain is Small ribosomal subunit protein uS4, found in Idiomarina loihiensis (strain ATCC BAA-735 / DSM 15497 / L2-TR).